The sequence spans 54 residues: Small ribosomal subunit protein uS14 (54 aa).

Residues Cys-19, Cys-22, Cys-37, and Cys-40 each contribute to the Zn(2+) site.

It belongs to the universal ribosomal protein uS14 family. Zinc-binding uS14 subfamily. In terms of assembly, part of the 30S ribosomal subunit. The cofactor is Zn(2+).

Functionally, binds 16S rRNA, required for the assembly of 30S particles. This is Small ribosomal subunit protein uS14 from Sulfolobus acidocaldarius (strain ATCC 33909 / DSM 639 / JCM 8929 / NBRC 15157 / NCIMB 11770).